Reading from the N-terminus, the 299-residue chain is Tyrosine recombinase XerC (299 aa).

A Core-binding (CB) domain is found at 1 to 86; that stretch reads MRNELLDFLE…AIRSLFKFLT (86 aa). In terms of domain architecture, Tyr recombinase spans 107-293; that stretch reads KLPEFLSIEE…NQARMTEVYN (187 aa). Active-site residues include Arg-146, Lys-170, His-245, Arg-248, and His-271. Tyr-280 serves as the catalytic O-(3'-phospho-DNA)-tyrosine intermediate.

Belongs to the 'phage' integrase family. XerC subfamily. As to quaternary structure, forms a cyclic heterotetrameric complex composed of two molecules of XerC and two molecules of XerD.

It localises to the cytoplasm. In terms of biological role, site-specific tyrosine recombinase, which acts by catalyzing the cutting and rejoining of the recombining DNA molecules. The XerC-XerD complex is essential to convert dimers of the bacterial chromosome into monomers to permit their segregation at cell division. It also contributes to the segregational stability of plasmids. The polypeptide is Tyrosine recombinase XerC (Natranaerobius thermophilus (strain ATCC BAA-1301 / DSM 18059 / JW/NM-WN-LF)).